Here is a 340-residue protein sequence, read N- to C-terminus: tRNA N6-adenosine threonylcarbamoyltransferase (340 aa).

Fe cation contacts are provided by His-115 and His-119. Substrate contacts are provided by residues 138-142 (VVSGG), Asp-171, Gly-184, Asp-188, and Asn-278. Asp-306 contacts Fe cation.

The protein belongs to the KAE1 / TsaD family. Requires Fe(2+) as cofactor.

It localises to the cytoplasm. It carries out the reaction L-threonylcarbamoyladenylate + adenosine(37) in tRNA = N(6)-L-threonylcarbamoyladenosine(37) in tRNA + AMP + H(+). In terms of biological role, required for the formation of a threonylcarbamoyl group on adenosine at position 37 (t(6)A37) in tRNAs that read codons beginning with adenine. Is involved in the transfer of the threonylcarbamoyl moiety of threonylcarbamoyl-AMP (TC-AMP) to the N6 group of A37, together with TsaE and TsaB. TsaD likely plays a direct catalytic role in this reaction. The chain is tRNA N6-adenosine threonylcarbamoyltransferase from Clostridium botulinum (strain Kyoto / Type A2).